The chain runs to 1023 residues: 2-oxoglutarate dehydrogenase complex component E1 (1023 aa).

The transit peptide at 1 to 40 directs the protein to the mitochondrion; the sequence is MFHLRTCAAKLRPLTASQTVKTFSQNRPAAARTFQQIRCY. N6-succinyllysine is present on Lys-74. At Ser-100 the chain carries Phosphoserine. Ca(2+) contacts are provided by His-143, Asp-156, and Asp-158. Arg-312 contacts thiamine diphosphate. At Lys-401 the chain carries N6-acetyllysine. Asp-411, Asn-444, and Ile-446 together coordinate thiamine diphosphate. Residues Asp-411, Asn-444, and Ile-446 each coordinate Mg(2+). A Glycyl lysine isopeptide (Lys-Gly) (interchain with G-Cter in ubiquitin) cross-link involves residue Lys-534. An N6-succinyllysine modification is found at Lys-564. Gln-676 contacts thiamine diphosphate. Lys-970 carries the N6-acetyllysine modification.

It belongs to the alpha-ketoglutarate dehydrogenase family. In terms of assembly, homodimer. The 2-oxoglutarate dehydrogenase complex is composed of OGDH (2-oxoglutarate dehydrogenase; E1), DLST (dihydrolipoamide succinyltransferase; E2), DLD (dihydrolipoamide dehydrogenase; E3) and the assembly factor KGD4. It contains multiple copies of the three enzymatic components (E1, E2 and E3). In the nucleus, the 2-oxoglutarate dehydrogenase complex associates with KAT2A. Interacts with ABHD11; this interaction maintains the functional lipoylation of the 2-oxoglutarate dehydrogenase complex. The cofactor is thiamine diphosphate. Mg(2+) serves as cofactor.

It localises to the mitochondrion. It is found in the nucleus. It catalyses the reaction N(6)-[(R)-lipoyl]-L-lysyl-[protein] + 2-oxoglutarate + H(+) = N(6)-[(R)-S(8)-succinyldihydrolipoyl]-L-lysyl-[protein] + CO2. Its activity is regulated as follows. Calcium ions and ADP stimulate, whereas ATP and NADH reduce catalytic activity. Its function is as follows. 2-oxoglutarate dehydrogenase (E1o) component of the 2-oxoglutarate dehydrogenase complex (OGDHC). Participates in the first step, rate limiting for the overall conversion of 2-oxoglutarate to succinyl-CoA and CO(2) catalyzed by the whole OGDHC. Catalyzes the irreversible decarboxylation of 2-oxoglutarate (alpha-ketoglutarate) via the thiamine diphosphate (ThDP) cofactor and subsequent transfer of the decarboxylated acyl intermediate on an oxidized dihydrolipoyl group that is covalently amidated to the E2 enzyme (dihydrolipoyllysine-residue succinyltransferase or DLST). Plays a key role in the Krebs (citric acid) cycle, which is a common pathway for oxidation of fuel molecules, including carbohydrates, fatty acids, and amino acids. Can catalyze the decarboxylation of 2-oxoadipate in vitro, but at a much lower rate than 2-oxoglutarate. Mainly active in the mitochondrion. A fraction of the 2-oxoglutarate dehydrogenase complex also localizes in the nucleus and is required for lysine succinylation of histones: associates with KAT2A on chromatin and provides succinyl-CoA to histone succinyltransferase KAT2A. The polypeptide is 2-oxoglutarate dehydrogenase complex component E1 (Macaca fascicularis (Crab-eating macaque)).